The chain runs to 942 residues: Valine--tRNA ligase (942 aa).

The 'HIGH' region signature appears at 43–53; sequence PNVTGTLHMGH. Residues 551–555 carry the 'KMSKS' region motif; sequence KMSKS. Residue Lys-554 participates in ATP binding. A coiled-coil region spans residues 876–942; it reads EGLVDLDAER…AGLREQRAKL (67 aa).

Belongs to the class-I aminoacyl-tRNA synthetase family. ValS type 1 subfamily. As to quaternary structure, monomer.

Its subcellular location is the cytoplasm. The enzyme catalyses tRNA(Val) + L-valine + ATP = L-valyl-tRNA(Val) + AMP + diphosphate. In terms of biological role, catalyzes the attachment of valine to tRNA(Val). As ValRS can inadvertently accommodate and process structurally similar amino acids such as threonine, to avoid such errors, it has a 'posttransfer' editing activity that hydrolyzes mischarged Thr-tRNA(Val) in a tRNA-dependent manner. The protein is Valine--tRNA ligase of Stenotrophomonas maltophilia (strain R551-3).